A 916-amino-acid polypeptide reads, in one-letter code: DNA mismatch repair protein MutS (916 aa).

The tract at residues 1–47 (MSEALSVPAAEGENTVTASESPDLAATSARAEKVGKQEKPEKAEKQS) is disordered. Residues 30 to 45 (RAEKVGKQEKPEKAEK) show a composition bias toward basic and acidic residues. 656–663 (GPNMGGKS) contacts ATP. A compositionally biased stretch (polar residues) spans 843–861 (ADATPTPQMDLFSAQSSPS). The segment at 843–880 (ADATPTPQMDLFSAQSSPSADDEDDKSAGQSAVPPAQA) is disordered.

The protein belongs to the DNA mismatch repair MutS family.

Functionally, this protein is involved in the repair of mismatches in DNA. It is possible that it carries out the mismatch recognition step. This protein has a weak ATPase activity. The protein is DNA mismatch repair protein MutS of Cupriavidus metallidurans (strain ATCC 43123 / DSM 2839 / NBRC 102507 / CH34) (Ralstonia metallidurans).